A 232-amino-acid chain; its full sequence is MLTADIPPNQSIYIQNLNERIKKEELKRSLYCLFSQFGRILDVVALKTPKLRGQAWVTFSEVTAAGHAVRQMQNFPFYDKPMRLQYAKAKSDCLAKAEGTFVPKDKKRKQEEKVERKREDSQRPNTANGPSANGPSANNGVPAPSFQPSGQETMPPNNILFIQNLPHETTSMMLQLLFEQYPGFKEIRMIDAKPGIAFVEYEDDVQASIAMQPLQGFKITPQNPMVISFAKK.

Positions 10–89 (QSIYIQNLNE…KPMRLQYAKA (80 aa)) constitute an RRM 1 domain. Residues 100-157 (TFVPKDKKRKQEEKVERKREDSQRPNTANGPSANGPSANNGVPAPSFQPSGQETMPPN) are disordered. Over residues 108-122 (RKQEEKVERKREDSQ) the composition is skewed to basic and acidic residues. Polar residues-rich tracts occupy residues 123–139 (RPNTANGPSANGPSANN) and 146–156 (FQPSGQETMPP). An RRM 2 domain is found at 158–232 (NILFIQNLPH…NPMVISFAKK (75 aa)).

The protein belongs to the RRM U1 A/B'' family. As to quaternary structure, component of the spliceosome where it is associated with snRNP U2.

It localises to the nucleus. The protein localises to the cajal body. The protein resides in the nucleoplasm. It is found in the cytoplasm. In terms of biological role, involved in nuclear pre-mRNA splicing. In Arabidopsis thaliana (Mouse-ear cress), this protein is U2 small nuclear ribonucleoprotein B'' (U2B'').